The primary structure comprises 169 residues: Disulfide bond formation protein B (169 aa).

Topologically, residues Met1 to Ala14 are cytoplasmic. The chain crosses the membrane as a helical span at residues Trp15–Tyr31. Topologically, residues Phe32 to Val49 are periplasmic. An intrachain disulfide couples Cys41 to Cys44. Residues Ala50–Pro65 traverse the membrane as a helical segment. The Cytoplasmic segment spans residues Lys66–Trp71. Residues Leu72–Trp89 traverse the membrane as a helical segment. At Gln90 to Gln144 the chain is on the periplasmic side. Residues Cys104 and Cys130 are joined by a disulfide bond. The helical transmembrane segment at Trp145 to Ser163 threads the bilayer. Over Gln164 to Lys169 the chain is Cytoplasmic.

It belongs to the DsbB family.

Its subcellular location is the cell inner membrane. Its function is as follows. Required for disulfide bond formation in some periplasmic proteins. Acts by oxidizing the DsbA protein. The sequence is that of Disulfide bond formation protein B from Photorhabdus laumondii subsp. laumondii (strain DSM 15139 / CIP 105565 / TT01) (Photorhabdus luminescens subsp. laumondii).